A 1588-amino-acid chain; its full sequence is Centrosomal protein of 170 kDa (1588 aa).

The FHA domain occupies 23 to 73 (IFVGRDDCELMLQSRSVDKQHAVINYDASMDEHLVKDLGSLNGTFVNDVRI). 4 disordered regions span residues 121 to 172 (LSQK…MPRG), 299 to 323 (KFTSDQRHKSKKASPGTQDLPGIQT), 338 to 447 (QNNP…EEPS), and 461 to 508 (SGSL…NPNS). Position 141 is a phosphoserine (S141). Residues 155–164 (EALKSEEKPM) show a composition bias toward basic and acidic residues. The span at 347 to 357 (ERTEEDSKSIK) shows a compositional bias: basic and acidic residues. Phosphoserine occurs at positions 355 and 358. Y363 bears the Phosphotyrosine mark. Residues 407–418 (KKKAQSTEKHQE) show a composition bias toward basic and acidic residues. Residues S443, S463, and S494 each carry the phosphoserine modification. T498 bears the Phosphothreonine mark. A phosphoserine mark is found at S568, S577, S628, and S631. A disordered region spans residues 602-854 (ELSATVENET…PHINKQNSSV (253 aa)). A compositionally biased stretch (polar residues) spans 620 to 631 (LRSTSCTTSLAS). T639 bears the Phosphothreonine mark. Residues 645-654 (NEEKLLESSR) are compositionally biased toward basic and acidic residues. S662 bears the Phosphoserine mark. Residues 663–691 (EIGEKQDTELQEKEAQVYQSEKHDADRGL) are compositionally biased toward basic and acidic residues. Position 718 is a phosphoserine (S718). A compositionally biased stretch (basic and acidic residues) spans 720-731 (SKEKSETEKETS). T752 bears the Phosphothreonine mark. Composition is skewed to basic and acidic residues over residues 764–774 (HIDKCREESSK) and 789–821 (SKGDRVIQNESKRRKAEEIPKCQASKGDKKESS). The span at 822-839 (KSLVRQGSFTIDKPSSNI) shows a compositional bias: polar residues. 3 positions are modified to phosphoserine: S829, S870, and S872. The interval 844-1588 (IPHINKQNSS…GEEEDVTVHE (745 aa)) is targeting to microtubules. Residues 899–908 (LREDNNKTDE) show a composition bias toward basic and acidic residues. 2 disordered regions span residues 899-1222 (LRED…RWRR) and 1228-1247 (ASTSEDEFGSNRNSPKHTRL). Phosphothreonine occurs at positions 906 and 912. Residues 913-937 (PSYNRDNSISPESDVDTASTISLVT) are compositionally biased toward polar residues. 3 positions are modified to phosphoserine: S922, S925, and S950. Residues 967–980 (DVTKSGSREKIEKK) show a composition bias toward basic and acidic residues. A Phosphoserine modification is found at S1008. Position 1012 is a phosphothreonine (T1012). The segment covering 1028–1038 (IMSSDQETYSC) has biased composition (polar residues). A Phosphothreonine modification is found at T1047. S1048 is subject to Phosphoserine. The span at 1049–1062 (ADEHNIHSKLEGGK) shows a compositional bias: basic and acidic residues. Residues 1075–1093 (STSKSTTLPRPRPTRTSLL) show a composition bias toward low complexity. A phosphoserine mark is found at S1102, S1104, S1122, S1123, S1135, S1150, and S1155. Residues 1103-1588 (DSELADADKA…GEEEDVTVHE (486 aa)) are targeting to centrosomes. Residues 1112-1128 (ASVASEVSTTSSTSKPP) show a composition bias toward low complexity. Residues 1158–1173 (EATISRSSASARTAEA) show a composition bias toward low complexity. A phosphoserine mark is found at S1188, S1195, S1200, S1229, S1231, S1241, S1260, and S1270. Residues 1191–1218 (TRANSISRLSDSKVKSMSSTHGSPSVNS) show a composition bias toward polar residues. Residues 1315 to 1334 (SVTSSGTAPSTTVSTAATTP) are disordered. At S1362 the chain carries Phosphoserine. A disordered region spans residues 1370 to 1398 (PLVHSKTPEGNNGRSVDSRPQPAEHPDHL). The stretch at 1467-1495 (KTSSMEISSILQELKRVEKQLQVINAMID) forms a coiled coil. Residues 1511 to 1540 (AILPSPPKQKSSPVNNHSSPSQTPALCPPE) are disordered. The span at 1518-1534 (KQKSSPVNNHSSPSQTP) shows a compositional bias: polar residues. Residues S1521 and S1522 each carry the phosphoserine modification.

It belongs to the CEP170 family. In terms of assembly, interacts with CCDC68 and CCDC120; leading to recruitment to centrosomes. Interacts with PLK1. Interacts with NIN. Interacts with FHDC1. Interacts with CCDC61. Interacts with TBK1; efficient complex formation may be dependent on the presence of CCDC61. Phosphorylated; probably by PLK1.

The protein resides in the cytoplasm. The protein localises to the cytoskeleton. It is found in the microtubule organizing center. Its subcellular location is the centrosome. It localises to the centriole. The protein resides in the spindle. Functionally, plays a role in microtubule organization. Required for centriole subdistal appendage assembly. The polypeptide is Centrosomal protein of 170 kDa (Cep170) (Mus musculus (Mouse)).